The chain runs to 780 residues: Oocyte zinc finger protein XlCOF8.4 (780 aa).

15 C2H2-type zinc fingers span residues 250–272 (FPCS…RRTH), 278–300 (FSCS…HRTH), 306–328 (FSCS…QKTH), 334–356 (FPCS…RRTH), 362–384 (YSCS…RRTH), 390–412 (YSCS…RRTH), 418–440 (YSCS…WKTH), 446–468 (FSCV…YRTH), 474–496 (FSCF…LKIH), 618–640 (LSCS…QKTH), 646–668 (FSCS…RRTH), 674–696 (YSCS…RRTH), 702–724 (YSCS…WRTH), 730–752 (FSCT…HRTH), and 758–780 (FSCS…FQLH).

It belongs to the krueppel C2H2-type zinc-finger protein family.

The protein resides in the nucleus. May be involved in transcriptional regulation. This Xenopus laevis (African clawed frog) protein is Oocyte zinc finger protein XlCOF8.4.